We begin with the raw amino-acid sequence, 378 residues long: Heat-inducible transcription repressor HrcA (378 aa).

This sequence belongs to the HrcA family.

Negative regulator of class I heat shock genes (grpE-dnaK-dnaJ and groELS operons). Prevents heat-shock induction of these operons. The protein is Heat-inducible transcription repressor HrcA of Synechocystis sp. (strain ATCC 27184 / PCC 6803 / Kazusa).